Consider the following 350-residue polypeptide: Phosphotriesterase-related protein (350 aa).

6 residues coordinate a divalent metal cation: H22, H24, E169, H201, H230, and D298.

It belongs to the metallo-dependent hydrolases superfamily. Phosphotriesterase family. Requires a divalent metal cation as cofactor.

In Drosophila pseudoobscura pseudoobscura (Fruit fly), this protein is Phosphotriesterase-related protein.